The sequence spans 244 residues: Mannose-binding protein C (244 aa).

A signal peptide spans 1 to 18 (MSLFTSFLLLCVLTAVYA). Residues 38-96 (GLNGFPGKDGHDGAKGEKGEPGQGLRGLQGPPGKVGPAGPPGNPGSKGATGPKGDRGES) form the Collagen-like domain. 4-hydroxyproline is present on P43. A disordered region spans residues 43 to 99 (PGKDGHDGAKGEKGEPGQGLRGLQGPPGKVGPAGPPGNPGSKGATGPKGDRGESVEF). A compositionally biased stretch (basic and acidic residues) spans 45-57 (KDGHDGAKGEKGE). Residues P58, P69, P78, and P81 each carry the 4-hydroxyproline modification. A compositionally biased stretch (low complexity) spans 65–74 (LQGPPGKVGP). The stretch at 108-126 (IAALRSELRAMRKWVLLSM) forms a coiled coil. One can recognise a C-type lectin domain in the interval 129 to 241 (NVGKKYFMSS…CSDSFLVVCE (113 aa)). 2 disulfide bridges follow: C151-C240 and C218-C232.

In terms of assembly, oligomeric complex of 3 or more homotrimers. Interacts with MASP1 and MASP2. Interacts with MEP1A and MEP1B and may inhibit their catalytic activity.

The protein resides in the secreted. Calcium-dependent lectin involved in innate immune defense. Binds mannose, fucose and N-acetylglucosamine on different microorganisms and activates the lectin complement pathway. Binds to late apoptotic cells, as well as to apoptotic blebs and to necrotic cells, but not to early apoptotic cells, facilitating their uptake by macrophages. The sequence is that of Mannose-binding protein C (Mbl2) from Rattus norvegicus (Rat).